Reading from the N-terminus, the 954-residue chain is MMVSSPPQLEINLETDAEFVARHIGITPSDLPKMLSLLGYGSLKELINAVIPPEIRLQRPLALSEGLSETAALQKLRTLAQQNQVWRSYIGMGYYNCITPSVIQRNILENPGWYTQYTPYQAEIAQGRLEALLNFQTLVSDLTGLAIANASLLDEATAAAEAMTLSFNACRQRGANRFLVAQDCHPQTLAVLRTRALPLGIQIVPIDPIAGELPWENAFGLLLQYPASDGAVRSPQALIAAAHERGLLVTVATDLLALTLLRPPGELGADIAVGSSQRFGVPLGYGGPHAAFFATREDFKRQLPGRLVGVSHDALGQRALRLALQTREQHIRREKATSNICTAQVLLAVVASMYAVYHGPDGLRQIAERIHQRTVRLAAGLEAAGYQLYYSEFFDTLRIGLGNLPVPVLKERAAAARINLRYFDDGSAGISLDETTTEKDVADLLALFGARPAEVEGGDRLPAALKRQSPYLQHPVFQDYHSEHALLRYIHRLQAKDLSLTTSMIPLGSCTMKLNATAEMLPISWPEFNQLHPFAPQEQAQGYQALFRELAAMLAEITGFDAISLQPNAGSQGEYAGLLVIRQYHHSRGESQRNVCLIPTSAHGTNPASAVMAGMQVVAVNCDAQGNIDVADLAAKAETYGDRLAALMITYPSTHGVFETGICQICDIIHRYGGQVYMDGANMNAQVGLCRPGDFGADVCHLNLHKTFCIPHGGGGPGVGPIGVKAHLAPFLPTTQVIPQGSETGPVTAAPWGSASILPISWMYITLMGGVGLTRATAIAILNANYIAKRLEPYYPVLYKGAHGLVAHECILDLRPLKKSAGIEVEDIAKRLMDYGFHAPTVSWPVPGTLMIEPTESETKAELDRFCEAMIAIRSEIAEIEAGVSDRQQNPLKNAPHPALMLATEPWPYPYSREVAAYPAPWLREYKFWPAVARIDNAYGDRHLVCTCSMPLTN.

Lys706 carries the post-translational modification N6-(pyridoxal phosphate)lysine.

Belongs to the GcvP family. In terms of assembly, the glycine cleavage system is composed of four proteins: P, T, L and H. Pyridoxal 5'-phosphate serves as cofactor.

It carries out the reaction N(6)-[(R)-lipoyl]-L-lysyl-[glycine-cleavage complex H protein] + glycine + H(+) = N(6)-[(R)-S(8)-aminomethyldihydrolipoyl]-L-lysyl-[glycine-cleavage complex H protein] + CO2. Functionally, the glycine cleavage system catalyzes the degradation of glycine. The P protein binds the alpha-amino group of glycine through its pyridoxal phosphate cofactor; CO(2) is released and the remaining methylamine moiety is then transferred to the lipoamide cofactor of the H protein. The polypeptide is Glycine dehydrogenase (decarboxylating) (Thermosynechococcus vestitus (strain NIES-2133 / IAM M-273 / BP-1)).